Reading from the N-terminus, the 188-residue chain is Elongation factor P 1 (188 aa).

It belongs to the elongation factor P family.

The protein localises to the cytoplasm. Its pathway is protein biosynthesis; polypeptide chain elongation. Its function is as follows. Involved in peptide bond synthesis. Stimulates efficient translation and peptide-bond synthesis on native or reconstituted 70S ribosomes in vitro. Probably functions indirectly by altering the affinity of the ribosome for aminoacyl-tRNA, thus increasing their reactivity as acceptors for peptidyl transferase. This is Elongation factor P 1 from Mesorhizobium japonicum (strain LMG 29417 / CECT 9101 / MAFF 303099) (Mesorhizobium loti (strain MAFF 303099)).